A 486-amino-acid chain; its full sequence is Aspartyl/glutamyl-tRNA(Asn/Gln) amidotransferase subunit B (486 aa).

Belongs to the GatB/GatE family. GatB subfamily. Heterotrimer of A, B and C subunits.

The enzyme catalyses L-glutamyl-tRNA(Gln) + L-glutamine + ATP + H2O = L-glutaminyl-tRNA(Gln) + L-glutamate + ADP + phosphate + H(+). It catalyses the reaction L-aspartyl-tRNA(Asn) + L-glutamine + ATP + H2O = L-asparaginyl-tRNA(Asn) + L-glutamate + ADP + phosphate + 2 H(+). Allows the formation of correctly charged Asn-tRNA(Asn) or Gln-tRNA(Gln) through the transamidation of misacylated Asp-tRNA(Asn) or Glu-tRNA(Gln) in organisms which lack either or both of asparaginyl-tRNA or glutaminyl-tRNA synthetases. The reaction takes place in the presence of glutamine and ATP through an activated phospho-Asp-tRNA(Asn) or phospho-Glu-tRNA(Gln). This chain is Aspartyl/glutamyl-tRNA(Asn/Gln) amidotransferase subunit B, found in Leptospira borgpetersenii serovar Hardjo-bovis (strain L550).